Consider the following 387-residue polypeptide: Phosphoglycerate kinase (387 aa).

Substrate-binding positions include 21 to 23 (DLN), Arg-36, 59 to 62 (HLGR), Arg-113, and Arg-146. ATP is bound by residues Lys-197, Glu-314, and 340–343 (GGDT).

Belongs to the phosphoglycerate kinase family. As to quaternary structure, monomer.

The protein resides in the cytoplasm. It catalyses the reaction (2R)-3-phosphoglycerate + ATP = (2R)-3-phospho-glyceroyl phosphate + ADP. The protein operates within carbohydrate degradation; glycolysis; pyruvate from D-glyceraldehyde 3-phosphate: step 2/5. This chain is Phosphoglycerate kinase, found in Pseudomonas paraeruginosa (strain DSM 24068 / PA7) (Pseudomonas aeruginosa (strain PA7)).